We begin with the raw amino-acid sequence, 154 residues long: Superoxide dismutase [Cu-Zn] (154 aa).

Positions 47, 49, and 64 each coordinate Cu cation. Residues Cys-58 and Cys-147 are joined by a disulfide bond. Residues His-64, His-72, His-81, and Asp-84 each coordinate Zn(2+). His-121 contributes to the Cu cation binding site. Arg-144 is a substrate binding site.

It belongs to the Cu-Zn superoxide dismutase family. Homodimer. Cu cation is required as a cofactor. It depends on Zn(2+) as a cofactor.

Its subcellular location is the cytoplasm. It carries out the reaction 2 superoxide + 2 H(+) = H2O2 + O2. Its function is as follows. Destroys radicals which are normally produced within the cells and which are toxic to biological systems. The protein is Superoxide dismutase [Cu-Zn] (SOD1) of Claviceps purpurea (strain 20.1) (Ergot fungus).